The chain runs to 462 residues: DIMBOA UDP-glucosyltransferase BX9 (462 aa).

Histidine 24 serves as the catalytic Proton acceptor. Position 24 (histidine 24) interacts with an anthocyanidin. Catalysis depends on aspartate 115, which acts as the Charge relay. 8 residues coordinate UDP-alpha-D-glucose: threonine 137, alanine 336, glutamine 338, histidine 353, tryptophan 356, asparagine 357, serine 358, and glutamate 361. Residue glycine 376 coordinates an anthocyanidin. UDP-alpha-D-glucose contacts are provided by aspartate 377 and glutamine 378.

This sequence belongs to the UDP-glycosyltransferase family. Mg(2+) is required as a cofactor. Requires Ca(2+) as cofactor. In terms of tissue distribution, expressed at the same levels in roots and shoots.

The catalysed reaction is DIMBOA + UDP-alpha-D-glucose = DIMBOA beta-D-glucoside + UDP + H(+). The enzyme catalyses DIBOA + UDP-alpha-D-glucose = DIBOA beta-D-glucoside + UDP + H(+). Its function is as follows. Glucosyltransferase involved in the last step of benzoxazinoid glucoside biosynthesis. Catalyzes the glucosylation of hydroxamic acids utilizing UDP-glucose as glucose doner, reducing the toxicity of these natural insecticides for storage. Can use DIMBOA and DIBOA as substrates, HMBOA (2-hydroxy-7-methoxy-2H-1,4-benzoxazin-3(4H)-one) and HBOA (2-hydroxy-2H-1,4-benzoxazin-3(4H)-one) with a lower efficiency, but not indole acetic acid or quercitin. The protein is DIMBOA UDP-glucosyltransferase BX9 (BX9) of Zea mays (Maize).